A 224-amino-acid polypeptide reads, in one-letter code: UPF0173 metal-dependent hydrolase STH3160 (224 aa).

It belongs to the UPF0173 family.

The chain is UPF0173 metal-dependent hydrolase STH3160 from Symbiobacterium thermophilum (strain DSM 24528 / JCM 14929 / IAM 14863 / T).